The following is a 406-amino-acid chain: Phosphopentomutase (406 aa).

Residues Asp10, Asp305, His310, Asp346, His347, and His358 each coordinate Mn(2+).

The protein belongs to the phosphopentomutase family. Mn(2+) serves as cofactor.

The protein resides in the cytoplasm. It carries out the reaction 2-deoxy-alpha-D-ribose 1-phosphate = 2-deoxy-D-ribose 5-phosphate. The catalysed reaction is alpha-D-ribose 1-phosphate = D-ribose 5-phosphate. Its pathway is carbohydrate degradation; 2-deoxy-D-ribose 1-phosphate degradation; D-glyceraldehyde 3-phosphate and acetaldehyde from 2-deoxy-alpha-D-ribose 1-phosphate: step 1/2. Functionally, isomerase that catalyzes the conversion of deoxy-ribose 1-phosphate (dRib-1-P) and ribose 1-phosphate (Rib-1-P) to deoxy-ribose 5-phosphate (dRib-5-P) and ribose 5-phosphate (Rib-5-P), respectively. In Aliivibrio fischeri (strain MJ11) (Vibrio fischeri), this protein is Phosphopentomutase.